Reading from the N-terminus, the 506-residue chain is Pisatin demethylase (506 aa).

C453 is a binding site for heme.

Belongs to the cytochrome P450 family. The cofactor is heme.

Its function is as follows. Can detoxify the phytoalexin pisatin from garden pea. Pisatin is an antimicrobial compound produced by pea in response to infection by plant pathogens. The protein is Pisatin demethylase (PDA6-1) of Fusarium vanettenii (Neocosmospora pisi).